The chain runs to 396 residues: Ribosomal RNA large subunit methyltransferase I (396 aa).

Residues 2–81 (SVRLVLAKGR…ESIDIAFFSR (80 aa)) form the PUA domain.

The protein belongs to the methyltransferase superfamily. RlmI family.

It is found in the cytoplasm. The catalysed reaction is cytidine(1962) in 23S rRNA + S-adenosyl-L-methionine = 5-methylcytidine(1962) in 23S rRNA + S-adenosyl-L-homocysteine + H(+). Specifically methylates the cytosine at position 1962 (m5C1962) of 23S rRNA. This is Ribosomal RNA large subunit methyltransferase I from Shigella flexneri.